The primary structure comprises 64 residues: Copper-metallothionein (64 aa).

At S1 the chain carries N-acetylserine. The Cu(+) site is built by C7, C11, C16, C18, C22, C24, C28, C30, C33, C36, C38, C43, C45, C49, C55, C57, C61, and C63.

Belongs to the metallothionein superfamily. Type 2 family.

Its function is as follows. The metallothioneins are involved in the cellular sequestration of toxic metal ions and regulation of essential trace elements. This isoform binds exclusively copper. The polypeptide is Copper-metallothionein (Helix pomatia (Roman snail)).